We begin with the raw amino-acid sequence, 172 residues long: RNA silencing suppressor p19 (172 aa).

Positions Met-1–Asp-20 are enriched in basic and acidic residues. The tract at residues Met-1–Pro-37 is disordered.

The protein belongs to the tombusvirus protein p19 family. Homodimer.

Its function is as follows. Viral suppressor of RNA silencing which binds specifically to silencing RNAs (siRNAs). Acts as a molecular caliper to specifically select siRNAs based on the length of the duplex region of the RNA. The protein is RNA silencing suppressor p19 of Cynara cardunculus var. scolymus (Globe artichoke).